The sequence spans 284 residues: 2-dehydro-3-deoxyphosphooctonate aldolase (284 aa).

The protein belongs to the KdsA family.

The protein resides in the cytoplasm. The catalysed reaction is D-arabinose 5-phosphate + phosphoenolpyruvate + H2O = 3-deoxy-alpha-D-manno-2-octulosonate-8-phosphate + phosphate. It participates in carbohydrate biosynthesis; 3-deoxy-D-manno-octulosonate biosynthesis; 3-deoxy-D-manno-octulosonate from D-ribulose 5-phosphate: step 2/3. The protein operates within bacterial outer membrane biogenesis; lipopolysaccharide biosynthesis. In Shigella boydii serotype 18 (strain CDC 3083-94 / BS512), this protein is 2-dehydro-3-deoxyphosphooctonate aldolase.